We begin with the raw amino-acid sequence, 213 residues long: MLKKRIGISILDCNFGNLEEELGELKRNGVTNIHLDVMDTTFVKNITFGPCIINRILEHDFVFDVHMMVESPLDIIMQIDLERVSLVTIHSEVCDKAGVAEYLRKRNVLFGIALNPETQVDDAEMRSADFVLIMSVKPGFGGQKFQEECLAKVEEVRRYGKMVGIDGGIEMSNIGRITGADYAVVGSGYFRSGDRKKFLRDITDEFLCGSCSG.

Ser9 serves as a coordination point for substrate. His34, Asp36, and His66 together coordinate a divalent metal cation. Catalysis depends on Asp36, which acts as the Proton acceptor. Substrate contacts are provided by residues His66, 139–142 (GFGG), 166–168 (DGG), and 186–187 (GS). Asp166 is an a divalent metal cation binding site. The active-site Proton donor is Asp166.

The protein belongs to the ribulose-phosphate 3-epimerase family. Requires Co(2+) as cofactor. It depends on Fe(2+) as a cofactor. The cofactor is Mn(2+). Zn(2+) serves as cofactor.

It catalyses the reaction D-ribulose 5-phosphate = D-xylulose 5-phosphate. It functions in the pathway carbohydrate degradation; pentose phosphate pathway; D-xylulose 5-phosphate from D-ribulose 5-phosphate (non-oxidative stage): step 1/1. In terms of biological role, catalyzes the reversible epimerization of D-ribulose 5-phosphate to D-xylulose 5-phosphate. This Encephalitozoon cuniculi (strain GB-M1) (Microsporidian parasite) protein is Ribulose-phosphate 3-epimerase (RPE1).